Consider the following 198-residue polypeptide: Peptidyl-tRNA hydrolase (198 aa).

Tyrosine 14 is a tRNA binding site. Histidine 19 (proton acceptor) is an active-site residue. Residues tyrosine 64, asparagine 66, and asparagine 112 each contribute to the tRNA site.

The protein belongs to the PTH family. Monomer.

It is found in the cytoplasm. It catalyses the reaction an N-acyl-L-alpha-aminoacyl-tRNA + H2O = an N-acyl-L-amino acid + a tRNA + H(+). Its function is as follows. Hydrolyzes ribosome-free peptidyl-tRNAs (with 1 or more amino acids incorporated), which drop off the ribosome during protein synthesis, or as a result of ribosome stalling. Catalyzes the release of premature peptidyl moieties from peptidyl-tRNA molecules trapped in stalled 50S ribosomal subunits, and thus maintains levels of free tRNAs and 50S ribosomes. This Beijerinckia indica subsp. indica (strain ATCC 9039 / DSM 1715 / NCIMB 8712) protein is Peptidyl-tRNA hydrolase.